We begin with the raw amino-acid sequence, 229 residues long: Large ribosomal subunit protein uL1 (229 aa).

Belongs to the universal ribosomal protein uL1 family. As to quaternary structure, part of the 50S ribosomal subunit.

Binds directly to 23S rRNA. The L1 stalk is quite mobile in the ribosome, and is involved in E site tRNA release. Its function is as follows. Protein L1 is also a translational repressor protein, it controls the translation of the L11 operon by binding to its mRNA. In Lactococcus lactis subsp. lactis (strain IL1403) (Streptococcus lactis), this protein is Large ribosomal subunit protein uL1.